A 428-amino-acid polypeptide reads, in one-letter code: C4-dicarboxylate transport protein (428 aa).

Helical transmembrane passes span 8-28 (SLYF…HFYP), 44-64 (LIKM…IAGM), 76-96 (VALL…LVIV), 142-162 (IGAF…LFGF), 184-204 (VIFG…FGAM), 222-242 (LIVC…GSIA), 289-309 (VVGL…SIYL), 326-346 (IFHQ…AAGV), and 352-372 (IVLA…LALI).

Belongs to the dicarboxylate/amino acid:cation symporter (DAACS) (TC 2.A.23) family.

Its subcellular location is the cell inner membrane. In terms of biological role, responsible for the transport of dicarboxylates such as succinate, fumarate, and malate from the periplasm across the membrane. This Cronobacter sakazakii (strain ATCC BAA-894) (Enterobacter sakazakii) protein is C4-dicarboxylate transport protein.